The following is a 169-amino-acid chain: Small ribosomal subunit protein uS5 (169 aa).

The 65-residue stretch at 15–79 (LKEQVVAINR…EAAKKNLRRI (65 aa)) folds into the S5 DRBM domain.

The protein belongs to the universal ribosomal protein uS5 family. Part of the 30S ribosomal subunit. Contacts proteins S4 and S8.

Its function is as follows. With S4 and S12 plays an important role in translational accuracy. In terms of biological role, located at the back of the 30S subunit body where it stabilizes the conformation of the head with respect to the body. This Solibacter usitatus (strain Ellin6076) protein is Small ribosomal subunit protein uS5.